The sequence spans 160 residues: MGVFTYETEFTSVIPPPRLFKAFILDADNLIPKIAPQAVKCAEIIEGDGGVGTIKKITFGEGSQFGSVTHKIDGIDKDNFAYSYSLVEGDALSDKIEKISYETKLVASSDGGSVIKSTSNYHTKGDVEIKEEHVKAGKEKASHLFKLVEDYLLANPNEYC.

The protein belongs to the BetVI family. Post-translationally, phosphorylated in vivo. Phosphorylation prevents its activity as ribonuclease. In terms of tissue distribution, highly expressed in roots. Expressed a low levels in ripe red fruits.

Possesses ribonuclease activity in vitro. The polypeptide is Major strawberry allergen Fra a 1.04 (Fragaria ananassa (Strawberry)).